Reading from the N-terminus, the 363-residue chain is Probable mannitol dehydrogenase 3 (363 aa).

Residues C51, H73, C104, C107, C110, C118, and C168 each coordinate Zn(2+).

The protein belongs to the zinc-containing alcohol dehydrogenase family. Requires Zn(2+) as cofactor.

It carries out the reaction D-mannitol + NAD(+) = D-mannose + NADH + H(+). Oxidizes mannitol to mannose. Provides the initial step by which translocated mannitol is committed to central metabolism and, by regulating mannitol pool size, is important in regulating salt tolerance at the cellular level. The protein is Probable mannitol dehydrogenase 3 (CAD3) of Stylosanthes humilis (Townsville stylo).